Consider the following 58-residue polypeptide: Rho-conotoxin TIA (58 aa).

A signal peptide spans 1-16; it reads MFTVFLLVVLATTGVS. Positions 17-38 are excised as a propeptide; the sequence is FTLDRASDGGNAVAKKSDVTAR. An interaction with ADRA1B region spans residues 40–42; sequence NWR. Disulfide bonds link C43–C49 and C44–C57. Residues 45 to 47 are lacks the Ser-Xaa-Pro motif that is crucial for potent interaction with nAChR; that stretch reads LIP. Cysteine amide is present on C57.

This sequence belongs to the conotoxin A superfamily. As to expression, expressed by the venom duct.

The protein resides in the secreted. Functionally, allosteric inhibitor of alpha-1B adrenergic receptors (ADRA1B). Binds to an allosteric modulatory site on transmembrane helix 6 and 7 at the base of extracellular loop 3 of ADRA1B. Also weakly inhibits alpha-1A (ADRA1A) and alpha-1D (ADRA1D) adrenergic receptors in a competitive manner. Potently inhibits contractions of vas deferens, spleen and aorta in response to noradrenaline. May also inhibits nicotinic acetylcholine receptors with a possible distinct nAChR binding mode from other alpha-conotoxins, due to a different three residue motif (lacks the Ser-Xaa-Pro motif). This Conus tulipa (Fish-hunting cone snail) protein is Rho-conotoxin TIA.